We begin with the raw amino-acid sequence, 321 residues long: Nodulation protein D 1 (321 aa).

Residues 6-63 form the HTH lysR-type domain; the sequence is LDLNLLVALDALMTERKLTAAARSINLSQPAMSAAITRLRTYFRDELFTMNGRELVPT. A DNA-binding region (H-T-H motif) is located at residues 23–42; it reads LTAAARSINLSQPAMSAAIT.

The protein belongs to the LysR transcriptional regulatory family.

Its function is as follows. NodD regulates the expression of the nodABCFE genes which encode other nodulation proteins. NodD is also a negative regulator of its own expression. Binds flavonoids as inducers. In Bradyrhizobium japonicum, this protein is Nodulation protein D 1 (nodD1).